A 142-amino-acid polypeptide reads, in one-letter code: Large ribosomal subunit protein uL22c (142 aa).

The protein belongs to the universal ribosomal protein uL22 family. As to quaternary structure, part of the 50S ribosomal subunit.

The protein localises to the plastid. The protein resides in the chloroplast. This protein binds specifically to 23S rRNA. In terms of biological role, the globular domain of the protein is located near the polypeptide exit tunnel on the outside of the subunit, while an extended beta-hairpin is found that lines the wall of the exit tunnel in the center of the 70S ribosome. The protein is Large ribosomal subunit protein uL22c (rpl22) of Oenothera parviflora (Small-flowered evening primrose).